A 147-amino-acid polypeptide reads, in one-letter code: Hemoglobin subunit epsilon (147 aa).

The Globin domain maps to 3–147; that stretch reads HFTAEEKAAI…VAIALGHKYH (145 aa). 2 positions are modified to phosphoserine: Ser-14 and Ser-51. Positions 64 and 93 each coordinate heme b.

The protein belongs to the globin family. In terms of assembly, heterotetramer of two alpha chains and two epsilon chains in early embryonic hemoglobin Gower-2; two zeta chains and two epsilon chains in early embryonic hemoglobin Gower-1. Red blood cells.

In terms of biological role, the epsilon chain is a beta-type chain of early mammalian embryonic hemoglobin. The sequence is that of Hemoglobin subunit epsilon (HBE1) from Pithecia irrorata (Gray monk saki).